A 177-amino-acid chain; its full sequence is Ribosome rescue factor SmrB (177 aa).

A Smr domain is found at 92–167 (LDLHGLTRQK…GDAAILVLIE (76 aa)).

Belongs to the SmrB family. In terms of assembly, associates with collided ribosomes, but not with correctly translating polysomes.

Functionally, acts as a ribosome collision sensor. Detects stalled/collided disomes (pairs of ribosomes where the leading ribosome is stalled and a second ribosome has collided with it) and endonucleolytically cleaves mRNA at the 5' boundary of the stalled ribosome. Stalled/collided disomes form a new interface (primarily via the 30S subunits) that binds SmrB. Cleaved mRNA becomes available for tmRNA ligation, leading to ribosomal subunit dissociation and rescue of stalled ribosomes. This Haemophilus ducreyi (strain 35000HP / ATCC 700724) protein is Ribosome rescue factor SmrB.